Consider the following 222-residue polypeptide: MKKMLTLLLSAGLVASIFGVMPAAAAPTVVNSTIVVPKGTTYDGQGKTFVANPSTLGDGSQAENQKPVFRLEAGATLKNVIIGAPAADGVHCYGNCNISNVVWQDVGEDALTLKSSGTVNITGGAAYKAYDKVFQINAAGTINIKNFRADDIGKLVRQNGGTTFTVNMTLDNSNISNVKDAIMRTDSSSSQGRITNTRYSKVPTLFKGFASGKTSQSGNTQY.

Positions 1 to 26 are cleaved as a signal peptide; the sequence is MKKMLTLLLSAGLVASIFGVMPAAAA.

Belongs to the polysaccharide lyase 3 family. The cofactor is Ca(2+).

It is found in the secreted. The catalysed reaction is Eliminative cleavage of (1-&gt;4)-alpha-D-galacturonan to give oligosaccharides with 4-deoxy-alpha-D-galact-4-enuronosyl groups at their non-reducing ends.. It carries out the reaction Eliminative cleavage of (1-&gt;4)-alpha-D-galacturonan methyl ester to give oligosaccharides with 4-deoxy-6-O-methyl-alpha-D-galact-4-enuronosyl groups at their non-reducing ends.. It participates in glycan metabolism; pectin degradation. Catalyzes the depolymerization of both polygalacturonate and pectins with low (20-34%) and high (90%) levels of methyl esterification, with an endo mode of action. In contrast to the majority of pectate lyases, displays high activity on highly methylated pectins. Does not show xylanase and cellulase activity. The chain is Pectate lyase A from Paenibacillus amylolyticus.